The primary structure comprises 740 residues: Folic acid synthesis protein fol1 (740 aa).

DHNA regions lie at residues 39–160 (DLIH…REID) and 161–280 (DQFF…SCFS). An HPPK region spans residues 291 to 449 (IDNEAVYISL…EKIVDHDIKP (159 aa)). One can recognise a Pterin-binding domain in the interval 471–730 (TYIMAILNLT…DVYEMYKISK (260 aa)). The DHPS stretch occupies residues 473-740 (IMAILNLTPD…MSDAIWKEIY (268 aa)). Mg(2+) is bound at residue N478. Residues T517, D552, N571, D643, K683, and 718–720 (RVH) each bind (7,8-dihydropterin-6-yl)methyl diphosphate.

This sequence in the N-terminal section; belongs to the DHNA family. It in the central section; belongs to the HPPK family. The protein in the C-terminal section; belongs to the DHPS family. Requires Mg(2+) as cofactor.

It carries out the reaction 7,8-dihydroneopterin = 6-hydroxymethyl-7,8-dihydropterin + glycolaldehyde. It catalyses the reaction 6-hydroxymethyl-7,8-dihydropterin + ATP = (7,8-dihydropterin-6-yl)methyl diphosphate + AMP + H(+). The catalysed reaction is (7,8-dihydropterin-6-yl)methyl diphosphate + 4-aminobenzoate = 7,8-dihydropteroate + diphosphate. It participates in cofactor biosynthesis; tetrahydrofolate biosynthesis; 2-amino-4-hydroxy-6-hydroxymethyl-7,8-dihydropteridine diphosphate from 7,8-dihydroneopterin triphosphate: step 3/4. Its pathway is cofactor biosynthesis; tetrahydrofolate biosynthesis; 2-amino-4-hydroxy-6-hydroxymethyl-7,8-dihydropteridine diphosphate from 7,8-dihydroneopterin triphosphate: step 4/4. It functions in the pathway cofactor biosynthesis; tetrahydrofolate biosynthesis; 7,8-dihydrofolate from 2-amino-4-hydroxy-6-hydroxymethyl-7,8-dihydropteridine diphosphate and 4-aminobenzoate: step 1/2. Functionally, catalyzes three sequential steps of tetrahydrofolate biosynthesis. In Pneumocystis carinii, this protein is Folic acid synthesis protein fol1 (fol1).